The sequence spans 212 residues: MNSIEFPLLDQTTQNSVISTTLNDFSNWSRLSSLWPLLYGTSCCFIEFASLIGSRFDFDRYGLVPRSSPRQADLILTAGTVTMKMAPSLVRLYEQMPEPKYVIAMGACTITGGMFSTDSYSTVRGVDKLIPVDVYLPGCPPKPEAIIDAITKLRKKISREIYEDPISFQRENRCFTINHKFHVGYSTYTGNYGQEFFYQPPSTSEIASDTFF.

Positions 43, 44, 108, and 139 each coordinate [4Fe-4S] cluster.

This sequence belongs to the complex I 20 kDa subunit family. As to quaternary structure, NDH is composed of at least 16 different subunits, 5 of which are encoded in the nucleus. Requires [4Fe-4S] cluster as cofactor.

It localises to the plastid. It is found in the chloroplast thylakoid membrane. It catalyses the reaction a plastoquinone + NADH + (n+1) H(+)(in) = a plastoquinol + NAD(+) + n H(+)(out). The enzyme catalyses a plastoquinone + NADPH + (n+1) H(+)(in) = a plastoquinol + NADP(+) + n H(+)(out). Its function is as follows. NDH shuttles electrons from NAD(P)H:plastoquinone, via FMN and iron-sulfur (Fe-S) centers, to quinones in the photosynthetic chain and possibly in a chloroplast respiratory chain. The immediate electron acceptor for the enzyme in this species is believed to be plastoquinone. Couples the redox reaction to proton translocation, and thus conserves the redox energy in a proton gradient. The polypeptide is NAD(P)H-quinone oxidoreductase subunit K, chloroplastic (Phaseolus vulgaris (Kidney bean)).